Consider the following 149-residue polypeptide: MEQTYVMVKPDGVQRGLVGEVISRIEKRGLKILALRMNVIAEATAKEHYGEHAARPFFPSLIEFITSGPSVSMVVAGKDAIKVMRAINGATNPVDAAPGTIRGDFALDVGRNVVHASDSPEAAAREIAIHFKDSEIGKYSRVDEVCLYE.

6 residues coordinate ATP: Lys-9, Phe-57, Arg-85, Thr-91, Arg-102, and Asn-112. His-115 acts as the Pros-phosphohistidine intermediate in catalysis.

The protein belongs to the NDK family. Mg(2+) is required as a cofactor.

It localises to the cytoplasm. It carries out the reaction a 2'-deoxyribonucleoside 5'-diphosphate + ATP = a 2'-deoxyribonucleoside 5'-triphosphate + ADP. The catalysed reaction is a ribonucleoside 5'-diphosphate + ATP = a ribonucleoside 5'-triphosphate + ADP. Major role in the synthesis of nucleoside triphosphates other than ATP. The ATP gamma phosphate is transferred to the NDP beta phosphate via a ping-pong mechanism, using a phosphorylated active-site intermediate. The chain is Nucleoside diphosphate kinase from Methanosarcina acetivorans (strain ATCC 35395 / DSM 2834 / JCM 12185 / C2A).